Reading from the N-terminus, the 291-residue chain is Mitochondrial thiamine pyrophosphate carrier 1 (291 aa).

The next 6 helical transmembrane spans lie at 12–31 (GATA…GAVA), 83–99 (IMYI…YSMF), 120–141 (SLIV…FDLL), 167–191 (GGLA…GLMF), 214–230 (FCGF…TFPL), and 265–282 (GFGI…VSLF). Solcar repeat units follow at residues 15–102 (ASVY…FSKA), 115–200 (RPSN…AREV), and 207–290 (NIPF…VLNG).

It belongs to the mitochondrial carrier (TC 2.A.29) family.

It is found in the mitochondrion inner membrane. Mitochondrial transporter that mediates uptake of thiamine pyrophosphate (ThPP) into mitochondria. The polypeptide is Mitochondrial thiamine pyrophosphate carrier 1 (TPC1) (Meyerozyma guilliermondii (strain ATCC 6260 / CBS 566 / DSM 6381 / JCM 1539 / NBRC 10279 / NRRL Y-324) (Yeast)).